The following is a 307-amino-acid chain: Adenosylcobinamide-GDP ribazoletransferase (307 aa).

Helical transmembrane passes span 22-42, 58-78, 80-100, 137-157, 161-181, 212-232, 248-268, and 283-303; these read PLFE…VPGA, PFVG…IGPI, GVIH…WELL, FGLA…ASLV, VWWM…VTAL, TAAL…LTSV, AWLG…AALF, and CIGA…AVVA.

This sequence belongs to the CobS family. Requires Mg(2+) as cofactor.

It localises to the cell membrane. The enzyme catalyses alpha-ribazole + adenosylcob(III)inamide-GDP = adenosylcob(III)alamin + GMP + H(+). It catalyses the reaction alpha-ribazole 5'-phosphate + adenosylcob(III)inamide-GDP = adenosylcob(III)alamin 5'-phosphate + GMP + H(+). It participates in cofactor biosynthesis; adenosylcobalamin biosynthesis; adenosylcobalamin from cob(II)yrinate a,c-diamide: step 7/7. Functionally, joins adenosylcobinamide-GDP and alpha-ribazole to generate adenosylcobalamin (Ado-cobalamin). Also synthesizes adenosylcobalamin 5'-phosphate from adenosylcobinamide-GDP and alpha-ribazole 5'-phosphate. The polypeptide is Adenosylcobinamide-GDP ribazoletransferase (Corynebacterium glutamicum (strain ATCC 13032 / DSM 20300 / JCM 1318 / BCRC 11384 / CCUG 27702 / LMG 3730 / NBRC 12168 / NCIMB 10025 / NRRL B-2784 / 534)).